Consider the following 326-residue polypeptide: Putative ABC transporter ATP-binding protein MPN_334 (326 aa).

Positions 7–239 (VEVKHLEKEF…NFGYRLKVNN (233 aa)) constitute an ABC transporter domain. Residue 42 to 49 (GQNGAGKT) coordinates ATP.

The protein belongs to the ABC transporter superfamily.

This chain is Putative ABC transporter ATP-binding protein MPN_334, found in Mycoplasma pneumoniae (strain ATCC 29342 / M129 / Subtype 1) (Mycoplasmoides pneumoniae).